We begin with the raw amino-acid sequence, 339 residues long: Dihydroorotate dehydrogenase (quinone) (339 aa).

FMN is bound by residues 62 to 66 (AGMDK) and threonine 86. Lysine 66 contributes to the substrate binding site. 111–115 (NRMGF) contacts substrate. Asparagine 139 and asparagine 172 together coordinate FMN. A substrate-binding site is contributed by asparagine 172. The active-site Nucleophile is the serine 175. Asparagine 177 is a substrate binding site. Positions 217 and 245 each coordinate FMN. 246-247 (NT) serves as a coordination point for substrate. Residues glycine 268, glycine 297, and 318-319 (YS) contribute to the FMN site.

The protein belongs to the dihydroorotate dehydrogenase family. Type 2 subfamily. In terms of assembly, monomer. FMN serves as cofactor.

The protein localises to the cell membrane. The enzyme catalyses (S)-dihydroorotate + a quinone = orotate + a quinol. It participates in pyrimidine metabolism; UMP biosynthesis via de novo pathway; orotate from (S)-dihydroorotate (quinone route): step 1/1. Its function is as follows. Catalyzes the conversion of dihydroorotate to orotate with quinone as electron acceptor. In Shewanella sp. (strain MR-4), this protein is Dihydroorotate dehydrogenase (quinone).